Reading from the N-terminus, the 560-residue chain is S100P-binding protein (560 aa).

Disordered regions lie at residues 259–292 (SDIP…ESTP) and 313–400 (SSSS…GKSF). Residues 313–352 (SSSSLQLPETSLASSTEPSPSLQLSASSVTAMNGQNNSNK) show a composition bias toward polar residues. The segment covering 378-387 (QKVEPKKNKP) has biased composition (basic and acidic residues).

It localises to the nucleus. This is S100P-binding protein (s100pbp) from Xenopus laevis (African clawed frog).